The chain runs to 1482 residues: Cystic fibrosis transmembrane conductance regulator (1482 aa).

Over M1–F77 the chain is Cytoplasmic. The helical transmembrane segment at F78–Q98 threads the bilayer. One can recognise an ABC transmembrane type-1 1 domain in the interval F81–L365. Over P99–Y122 the chain is Extracellular. The chain crosses the membrane as a helical span at residues L123–H146. Topologically, residues H147 to L195 are cytoplasmic. A helical membrane pass occupies residues A196–W216. Residues E217 to S222 are Extracellular-facing. Residues A223 to M243 traverse the membrane as a helical segment. The Cytoplasmic segment spans residues M244–K298. Residues A299 to F319 traverse the membrane as a helical segment. The Extracellular segment spans residues L320 to T339. Residues I340–V358 form a helical membrane-spanning segment. Residues Q359–S859 are Cytoplasmic-facing. Residues W401, G458–T465, and Q493 contribute to the ATP site. Positions N423 to G646 constitute an ABC transporter 1 domain. C524 is lipidated: S-palmitoyl cysteine. Phosphoserine occurs at positions 549 and 660. The tract at residues S654 to E832 is disordered R region. S670 is subject to Phosphoserine; by PKA. Position 686 is a phosphoserine (S686). Residue K688 forms a Glycyl lysine isopeptide (Lys-Gly) (interchain with G-Cter in ubiquitin) linkage. Phosphoserine is present on residues S700 and S712. T717 is modified (phosphothreonine). 5 positions are modified to phosphoserine: S738, S769, S791, S796, and S814. Residues L860–A880 traverse the membrane as a helical segment. The ABC transmembrane type-1 2 domain occupies L860–S1156. Over V881–I919 the chain is Extracellular. N-linked (GlcNAc...) asparagine glycosylation is found at N895 and N901. Residues Y920–H940 form a discontinuously helical membrane-spanning segment. Residues T941 to T991 lie on the Cytoplasmic side of the membrane. Residues I992 to L1012 traverse the membrane as a helical segment. Over Q1013–P1014 the chain is Extracellular. Residues Y1015–L1035 traverse the membrane as a helical segment. Over H1036–T1096 the chain is Cytoplasmic. A helical transmembrane segment spans residues L1097–F1117. Residues I1118–G1131 lie on the Extracellular side of the membrane. Residues I1132–I1152 form a helical membrane-spanning segment. The Cytoplasmic portion of the chain corresponds to D1153–L1482. In terms of domain architecture, ABC transporter 2 spans M1212–P1445. Residues Y1221 and G1246–S1253 each bind ATP. The interval R1388–L1482 is interaction with GORASP2. C1397 carries S-palmitoyl cysteine lipidation. Phosphoserine occurs at positions 1446 and 1458. Residues K1450–L1482 form a disordered region. The span at L1451–R1463 shows a compositional bias: basic residues. Over residues E1472–L1482 the composition is skewed to acidic residues. Positions T1480–L1482 match the PDZ-binding motif.

This sequence belongs to the ABC transporter superfamily. ABCC family. CFTR transporter (TC 3.A.1.202) subfamily. Monomer; does not require oligomerization for channel activity. May form oligomers in the membrane. Interacts with SLC26A3, SLC26A6 and NHERF1. Interacts with SHANK2. Interacts with MYO6. Interacts (via C-terminus) with GOPC (via PDZ domain); this promotes CFTR internalization and thereby decreases channel activity. Interacts with SLC4A7 through NHERF1. Found in a complex with MYO5B and RAB11A. Interacts with ANO1. Interacts with SLC26A8. Interacts with AHCYL1; the interaction increases CFTR activity. Interacts with CSE1L. The core-glycosylated form interacts with GORASP2 (via PDZ GRASP-type 1 domain) in respone to ER stress. Interacts with MARCHF2; the interaction leads to CFTR ubiqtuitination and degradation. Interacts with ADGRG2. In terms of processing, N-glycosylated. Phosphorylated; cAMP treatment promotes phosphorylation and activates the channel. Dephosphorylation decreases the ATPase activity (in vitro). Phosphorylation at PKA sites activates the channel. Phosphorylation at PKC sites enhances the response to phosphorylation by PKA. Phosphorylated by AMPK; this inhibits channel activity. Post-translationally, ubiquitinated, leading to its degradation in the lysosome. Deubiquitination by USP10 in early endosomes enhances its endocytic recycling to the cell membrane. Ubiquitinated by RNF185 during ER stress. Ubiquitinated by MARCHF2.

The protein resides in the apical cell membrane. It is found in the early endosome membrane. The protein localises to the cell membrane. Its subcellular location is the recycling endosome membrane. It localises to the endoplasmic reticulum membrane. The protein resides in the nucleus. It carries out the reaction ATP + H2O + closed Cl(-) channel = ADP + phosphate + open Cl(-) channel.. The catalysed reaction is chloride(in) = chloride(out). The enzyme catalyses hydrogencarbonate(in) = hydrogencarbonate(out). It catalyses the reaction ATP + H2O = ADP + phosphate + H(+). Functionally, epithelial ion channel that plays an important role in the regulation of epithelial ion and water transport and fluid homeostasis. Mediates the transport of chloride ions across the cell membrane. Possesses an intrinsic ATPase activity and utilizes ATP to gate its channel; the passive flow of anions through the channel is gated by cycles of ATP binding and hydrolysis by the ATP-binding domains. The ion channel is also permeable to HCO(3)(-); selectivity depends on the extracellular chloride concentration. Exerts its function also by modulating the activity of other ion channels and transporters. Contributes to the regulation of the pH and the ion content of the epithelial fluid layer. Modulates the activity of the epithelial sodium channel (ENaC) complex, in part by regulating the cell surface expression of the ENaC complex. May regulate bicarbonate secretion and salvage in epithelial cells by regulating the transporter SLC4A7. Can inhibit the chloride channel activity of ANO1. Plays a role in the chloride and bicarbonate homeostasis during sperm epididymal maturation and capacitation. This chain is Cystic fibrosis transmembrane conductance regulator, found in Otolemur garnettii (Small-eared galago).